The sequence spans 597 residues: DNA ligase (597 aa).

Glutamate 262 contacts ATP. The active-site N6-AMP-lysine intermediate is the lysine 264. Residues arginine 269, arginine 284, glutamate 314, phenylalanine 354, arginine 431, and lysine 437 each contribute to the ATP site.

The protein belongs to the ATP-dependent DNA ligase family. Mg(2+) is required as a cofactor. The cofactor is Mn(2+).

It catalyses the reaction ATP + (deoxyribonucleotide)n-3'-hydroxyl + 5'-phospho-(deoxyribonucleotide)m = (deoxyribonucleotide)n+m + AMP + diphosphate.. The catalysed reaction is ADP + (deoxyribonucleotide)n-3'-hydroxyl + 5'-phospho-(deoxyribonucleotide)m = (deoxyribonucleotide)n+m + AMP + phosphate.. It carries out the reaction GTP + (deoxyribonucleotide)n-3'-hydroxyl + 5'-phospho-(deoxyribonucleotide)m = (deoxyribonucleotide)n+m + GMP + diphosphate.. With respect to regulation, inhibited by Ca(2+) and Zn(2+). Functionally, DNA ligase that seals nicks in double-stranded DNA during DNA replication, DNA recombination and DNA repair. Can use both ATP and ADP. The polypeptide is DNA ligase (Staphylothermus marinus (strain ATCC 43588 / DSM 3639 / JCM 9404 / F1)).